We begin with the raw amino-acid sequence, 323 residues long: Cyclin-H (323 aa).

Residues 296–323 (GYEDDGYISKKPKTEEDEWTDEDFGDSL) are disordered. A compositionally biased stretch (acidic residues) spans 310-323 (EEDEWTDEDFGDSL).

Belongs to the cyclin family. Cyclin C subfamily. As to quaternary structure, associates primarily with CDK7 and MAT1 to form the CAK complex. CAK can further associate with the core-TFIIH to form the TFIIH basal transcription factor.

The protein localises to the nucleus. Regulates CDK7, the catalytic subunit of the CDK-activating kinase (CAK) enzymatic complex. CAK activates the cyclin-associated kinases CDK1, CDK2, CDK4 and CDK6 by threonine phosphorylation. CAK complexed to the core-TFIIH basal transcription factor activates RNA polymerase II by serine phosphorylation of the repetitive C-terminal domain (CTD) of its large subunit (POLR2A), allowing its escape from the promoter and elongation of the transcripts. Involved in cell cycle control and in RNA transcription by RNA polymerase II. Its expression and activity are constant throughout the cell cycle. This is Cyclin-H (ccnh) from Xenopus laevis (African clawed frog).